The following is a 310-amino-acid chain: tRNA-cytidine(32) 2-sulfurtransferase (310 aa).

A PP-loop motif motif is present at residues 47-52 (SGGKDS). Residues C122, C125, and C213 each coordinate [4Fe-4S] cluster.

It belongs to the TtcA family. As to quaternary structure, homodimer. Mg(2+) is required as a cofactor. [4Fe-4S] cluster serves as cofactor.

Its subcellular location is the cytoplasm. It catalyses the reaction cytidine(32) in tRNA + S-sulfanyl-L-cysteinyl-[cysteine desulfurase] + AH2 + ATP = 2-thiocytidine(32) in tRNA + L-cysteinyl-[cysteine desulfurase] + A + AMP + diphosphate + H(+). Its pathway is tRNA modification. Catalyzes the ATP-dependent 2-thiolation of cytidine in position 32 of tRNA, to form 2-thiocytidine (s(2)C32). The sulfur atoms are provided by the cysteine/cysteine desulfurase (IscS) system. The polypeptide is tRNA-cytidine(32) 2-sulfurtransferase (Haemophilus influenzae (strain PittEE)).